The primary structure comprises 81 residues: Large ribosomal subunit protein bL31B (81 aa).

This sequence belongs to the bacterial ribosomal protein bL31 family. Type B subfamily. In terms of assembly, part of the 50S ribosomal subunit.

In Pediococcus pentosaceus (strain ATCC 25745 / CCUG 21536 / LMG 10740 / 183-1w), this protein is Large ribosomal subunit protein bL31B.